A 348-amino-acid chain; its full sequence is Mannonate dehydratase (348 aa).

Belongs to the mannonate dehydratase family. It depends on Fe(2+) as a cofactor. Mn(2+) serves as cofactor.

It carries out the reaction D-mannonate = 2-dehydro-3-deoxy-D-gluconate + H2O. The protein operates within carbohydrate metabolism; pentose and glucuronate interconversion. In terms of biological role, catalyzes the dehydration of D-mannonate. This chain is Mannonate dehydratase, found in Streptococcus agalactiae serotype V (strain ATCC BAA-611 / 2603 V/R).